The sequence spans 440 residues: 3-phosphoshikimate 1-carboxyvinyltransferase (440 aa).

3 residues coordinate 3-phosphoshikimate: Lys28, Ser29, and Arg33. Lys28 is a phosphoenolpyruvate binding site. Positions 98 and 126 each coordinate phosphoenolpyruvate. Ser171, Gln173, Asp318, and Lys345 together coordinate 3-phosphoshikimate. Residue Gln173 coordinates phosphoenolpyruvate. Asp318 (proton acceptor) is an active-site residue. Phosphoenolpyruvate contacts are provided by Arg349 and Arg391.

Belongs to the EPSP synthase family. As to quaternary structure, monomer.

Its subcellular location is the cytoplasm. The catalysed reaction is 3-phosphoshikimate + phosphoenolpyruvate = 5-O-(1-carboxyvinyl)-3-phosphoshikimate + phosphate. It participates in metabolic intermediate biosynthesis; chorismate biosynthesis; chorismate from D-erythrose 4-phosphate and phosphoenolpyruvate: step 6/7. Catalyzes the transfer of the enolpyruvyl moiety of phosphoenolpyruvate (PEP) to the 5-hydroxyl of shikimate-3-phosphate (S3P) to produce enolpyruvyl shikimate-3-phosphate and inorganic phosphate. The sequence is that of 3-phosphoshikimate 1-carboxyvinyltransferase from Anaeromyxobacter sp. (strain K).